A 570-amino-acid polypeptide reads, in one-letter code: Endo-1,4-beta-xylanase 5-like (570 aa).

Positions Met1–Gly23 are cleaved as a signal peptide. N-linked (GlcNAc...) asparagine glycans are attached at residues Asn197, Asn261, and Asn307. The 300-residue stretch at Lys202 to Leu501 folds into the GH10 domain. Glu332 serves as the catalytic Proton donor. Residue Asn346 is glycosylated (N-linked (GlcNAc...) asparagine). Glu439 (nucleophile) is an active-site residue. Asn490, Asn515, Asn537, and Asn545 each carry an N-linked (GlcNAc...) asparagine glycan.

It belongs to the glycosyl hydrolase 10 (cellulase F) family.

It carries out the reaction Endohydrolysis of (1-&gt;4)-beta-D-xylosidic linkages in xylans.. It participates in glycan degradation; xylan degradation. Binds to and hydrolyzes insoluble and soluble xylan substrates. The polypeptide is Endo-1,4-beta-xylanase 5-like (Arabidopsis thaliana (Mouse-ear cress)).